The sequence spans 334 residues: Non-functional pseudokinase ZED1 (334 aa).

The Protein kinase domain occupies 49-334 (FSESRIISSW…KELKLIEKLS (286 aa)). ATP contacts are provided by residues 55–63 (ISSWGYFIW) and lysine 76. O-acetylthreonine occurs at positions 125 and 177.

Belongs to the protein kinase superfamily. Ser/Thr protein kinase family. ZRK subfamily. As to quaternary structure, interacts with RPP13L4/ZAR1. Component of an immune signaling complex made of, at least, SZE1, BKN2/SZE2, ZAR1 and ZED1. Binds directly to SZE1 at the plasma membrane. As to expression, expressed in seedlings, young leaves, floral organs, shoot apical meristems (SAM) and inflorescence stems.

It localises to the cytoplasm. It is found in the cytosol. The protein resides in the nucleus. The protein localises to the cell membrane. Together with RPP13L4/ZAR1, involved in the ambient temperature (above 22 degrees Celsius)-sensitive aerial organ development. Together with RPP13L4/ZAR1, involved in the regulation of the ambient temperature-sensitive intersection of growth and immune response in the absence of pathogens, by repressing the transcription of SNC1. Probable non-functional kinase required for recognition of the Pseudomonas syringae type III effector HopZ1a by RPP13L4/ZAR1 and, together with SZE1 and SZE2, to trigger subsequent defense responses. May function as a decoy to trap HopZ1a in the ZAR1 complex for recognition by the plant immune system. This is Non-functional pseudokinase ZED1 from Arabidopsis thaliana (Mouse-ear cress).